Here is a 379-residue protein sequence, read N- to C-terminus: Anhydro-N-acetylmuramic acid kinase (379 aa).

9 to 16 contacts ATP; the sequence is GTSVDGID.

This sequence belongs to the anhydro-N-acetylmuramic acid kinase family.

The enzyme catalyses 1,6-anhydro-N-acetyl-beta-muramate + ATP + H2O = N-acetyl-D-muramate 6-phosphate + ADP + H(+). It functions in the pathway amino-sugar metabolism; 1,6-anhydro-N-acetylmuramate degradation. Its pathway is cell wall biogenesis; peptidoglycan recycling. In terms of biological role, catalyzes the specific phosphorylation of 1,6-anhydro-N-acetylmuramic acid (anhMurNAc) with the simultaneous cleavage of the 1,6-anhydro ring, generating MurNAc-6-P. Is required for the utilization of anhMurNAc either imported from the medium or derived from its own cell wall murein, and thus plays a role in cell wall recycling. The chain is Anhydro-N-acetylmuramic acid kinase from Acaryochloris marina (strain MBIC 11017).